We begin with the raw amino-acid sequence, 295 residues long: Protoheme IX farnesyltransferase 2 (295 aa).

Transmembrane regions (helical) follow at residues 9-29 (ITKP…FFLA), 36-56 (FALF…GCVF), 83-103 (LPLA…LLYV), 108-128 (LSAF…SLWL), 135-155 (GTLV…CAVS), 163-183 (VTLL…IAIF), 209-229 (IVLY…GGYA), 230-250 (GLGY…MAWG), and 264-284 (VFGF…VDSQ).

It belongs to the UbiA prenyltransferase family. Protoheme IX farnesyltransferase subfamily.

It localises to the cell inner membrane. The enzyme catalyses heme b + (2E,6E)-farnesyl diphosphate + H2O = Fe(II)-heme o + diphosphate. It functions in the pathway porphyrin-containing compound metabolism; heme O biosynthesis; heme O from protoheme: step 1/1. Its function is as follows. Converts heme B (protoheme IX) to heme O by substitution of the vinyl group on carbon 2 of heme B porphyrin ring with a hydroxyethyl farnesyl side group. This chain is Protoheme IX farnesyltransferase 2, found in Pseudomonas putida (strain ATCC 47054 / DSM 6125 / CFBP 8728 / NCIMB 11950 / KT2440).